A 111-amino-acid chain; its full sequence is Rubredoxin (111 aa).

The region spanning 11–62 (LDRFECRSCGYVYEPEKGDSKHDIAPETPFAELPINWRCPVCTAKKAAFSNI) is the Rubredoxin-like domain. Positions 16, 19, 49, and 52 each coordinate Fe cation.

It belongs to the rubredoxin family. Fe(3+) serves as cofactor.

Its function is as follows. Rubredoxin is a small nonheme, iron protein lacking acid-labile sulfide. Its single Fe, chelated to 4 Cys, functions as an electron acceptor and may also stabilize the conformation of the molecule. Could be involved in hydrogenase-linked redox processes. This Trichormus variabilis (strain ATCC 29413 / PCC 7937) (Anabaena variabilis) protein is Rubredoxin (rub).